Here is a 504-residue protein sequence, read N- to C-terminus: Arabinose import ATP-binding protein AraG (504 aa).

ABC transporter domains lie at 8-243 and 256-499; these read LSFR…MVGR and YGEE…MPKV. 40 to 47 lines the ATP pocket; the sequence is GENGAGKS.

The protein belongs to the ABC transporter superfamily. Arabinose importer (TC 3.A.1.2.2) family. The complex is composed of two ATP-binding proteins (AraG), two transmembrane proteins (AraH) and a solute-binding protein (AraF).

It localises to the cell inner membrane. It carries out the reaction L-arabinose(out) + ATP + H2O = L-arabinose(in) + ADP + phosphate + H(+). Its function is as follows. Part of the ABC transporter complex AraFGH involved in arabinose import. Responsible for energy coupling to the transport system. This Shigella dysenteriae serotype 1 (strain Sd197) protein is Arabinose import ATP-binding protein AraG.